The primary structure comprises 253 residues: Phosphate import ATP-binding protein PstB 1 (253 aa).

Residues 7–248 (LQIRDLSVYY…PKRKETEDYI (242 aa)) enclose the ABC transporter domain. Position 39 to 46 (39 to 46 (GPSGSGKS)) interacts with ATP.

Belongs to the ABC transporter superfamily. Phosphate importer (TC 3.A.1.7) family. The complex is composed of two ATP-binding proteins (PstB), two transmembrane proteins (PstC and PstA) and a solute-binding protein (PstS).

Its subcellular location is the cell membrane. It carries out the reaction phosphate(out) + ATP + H2O = ADP + 2 phosphate(in) + H(+). Its function is as follows. Part of the ABC transporter complex PstSACB involved in phosphate import. Responsible for energy coupling to the transport system. The chain is Phosphate import ATP-binding protein PstB 1 from Streptococcus pyogenes serotype M12 (strain MGAS9429).